A 125-amino-acid polypeptide reads, in one-letter code: Succinate dehydrogenase cytochrome b556 subunit (125 aa).

Over 1-22 (MNAKRPVNLDLTKFHFPPMAIL) the chain is Cytoplasmic. A helical transmembrane segment spans residues 23 to 48 (SIGHRISGFVLFLCMPLMFYLLHRAT). The Periplasmic segment spans residues 49–65 (ASAESFYHLHQLLLHNG). Residues 66-86 (WIKLAVWIMLSATLFHLFAGI) traverse the membrane as a helical segment. Histidine 81 is a binding site for heme. The Cytoplasmic segment spans residues 87–104 (RHLAMDLGFWESVPEGRI). Residues 105–125 (SAYTVFVVSFIAIVLAGVWIW) form a helical membrane-spanning segment.

It belongs to the cytochrome b560 family. As to quaternary structure, part of an enzyme complex containing four subunits: a flavoprotein, an iron-sulfur protein, plus two membrane-anchoring proteins, SdhC and SdhD. The complex can form homotrimers. It depends on heme as a cofactor.

It localises to the cell inner membrane. It functions in the pathway carbohydrate metabolism; tricarboxylic acid cycle. In terms of biological role, membrane-anchoring subunit of succinate dehydrogenase (SDH). The chain is Succinate dehydrogenase cytochrome b556 subunit (sdhC) from Coxiella burnetii (strain RSA 493 / Nine Mile phase I).